The chain runs to 274 residues: 2,3,4,5-tetrahydropyridine-2,6-dicarboxylate N-succinyltransferase (274 aa).

Residues Arg-104 and Asp-141 each contribute to the substrate site.

It belongs to the transferase hexapeptide repeat family. In terms of assembly, homotrimer.

It is found in the cytoplasm. It catalyses the reaction (S)-2,3,4,5-tetrahydrodipicolinate + succinyl-CoA + H2O = (S)-2-succinylamino-6-oxoheptanedioate + CoA. The protein operates within amino-acid biosynthesis; L-lysine biosynthesis via DAP pathway; LL-2,6-diaminopimelate from (S)-tetrahydrodipicolinate (succinylase route): step 1/3. The sequence is that of 2,3,4,5-tetrahydropyridine-2,6-dicarboxylate N-succinyltransferase from Shigella dysenteriae serotype 1 (strain Sd197).